A 405-amino-acid polypeptide reads, in one-letter code: Diaminopimelate decarboxylase (405 aa).

N6-(pyridoxal phosphate)lysine is present on lysine 46. Pyridoxal 5'-phosphate contacts are provided by residues glycine 225 and 259 to 262 (EPGR). Substrate contacts are provided by arginine 262, arginine 298, and tyrosine 302. Cysteine 329 acts as the Proton donor in catalysis. The substrate site is built by glutamate 330 and tyrosine 358. Position 358 (tyrosine 358) interacts with pyridoxal 5'-phosphate.

It belongs to the Orn/Lys/Arg decarboxylase class-II family. LysA subfamily. In terms of assembly, homodimer. Pyridoxal 5'-phosphate is required as a cofactor.

The enzyme catalyses meso-2,6-diaminopimelate + H(+) = L-lysine + CO2. It participates in amino-acid biosynthesis; L-lysine biosynthesis via DAP pathway; L-lysine from DL-2,6-diaminopimelate: step 1/1. In terms of biological role, specifically catalyzes the decarboxylation of meso-diaminopimelate (meso-DAP) to L-lysine. This chain is Diaminopimelate decarboxylase, found in Helicobacter pylori (Campylobacter pylori).